Here is a 687-residue protein sequence, read N- to C-terminus: Protein white (687 aa).

Residues 1–30 (MGQEDQELLIRGGSKHPSAEHLNNGDSGAA) are disordered. At 1 to 419 (MGQEDQELLI…FMQFRAVLWR (419 aa)) the chain is on the cytoplasmic side. One can recognise an ABC transporter domain in the interval 93–341 (NRTRGLFCNE…FSYVGAQCPT (249 aa)). Position 130–137 (130–137 (GSSGAGKT)) interacts with ATP. The chain crosses the membrane as a helical span at residues 420 to 440 (SWLSVLKEPLLVKVRLIQTTM). Topologically, residues 441–460 (VAILIGLIFLGQQLTQVGVM) are extracellular. Residues 461-481 (NINGAIFLFLTNMTFQNVFAT) form a helical membrane-spanning segment. The Cytoplasmic segment spans residues 482–497 (INVFTSELPVFMREAR). A helical transmembrane segment spans residues 498 to 518 (SRLYRCDTYFLGKTIAELPLF). The Extracellular segment spans residues 519–531 (LTVPLVFTAIAYP). A helical transmembrane segment spans residues 532-552 (MIGLRAGVLHFFNCLALVTLV). Topologically, residues 553 to 568 (ANVSTSFGYLISCASS) are cytoplasmic. Residues 569–589 (STSMALSVGPPVIIPFLLFGG) form a helical membrane-spanning segment. Topologically, residues 590-644 (FFLNSGSVPVYLKWLSYLSWFRYANEGLLINQWADVEPGEISCTSSNTTCPSSGK) are extracellular. A glycan (N-linked (GlcNAc...) asparagine) is linked at Asn636. Residues 645–665 (VILETLNFSAADLPLDYVGLA) traverse the membrane as a helical segment. Over 666–675 (ILIVSFRVLA) the chain is Cytoplasmic.

This sequence belongs to the ABC transporter superfamily. ABCG family. Eye pigment precursor importer (TC 3.A.1.204) subfamily. May form a heterodimer with bw/brown. May form a heterodimer with st/scarlet. In terms of tissue distribution, expressed in the head (at protein level). Expressed in the eye, specifically in retina primary pigment cells, in the basement membrane of the base of secondary and tertiary pigment cells, and in retinula cells (at protein level). Expressed in the retina underlying lamina in the epithelial glia that surrounds the array of lamina cartridges (at protein level). Weakly expressed in photoreceptors, specifically in terminals of R1-R6, R7 and R8 (at protein level). Expressed at very low levels in medulla and central brain (at protein level). Expressed in principal cells of the Malpighian tubules.

The protein resides in the cytoplasmic vesicle membrane. The enzyme catalyses 3',5'-cyclic GMP(in) + ATP + H2O = 3',5'-cyclic GMP(out) + ADP + phosphate + H(+). It catalyses the reaction guanine(out) + ATP + H2O = guanine(in) + ADP + phosphate + H(+). The catalysed reaction is riboflavin(in) + ATP + H2O = riboflavin(out) + ADP + phosphate + H(+). It carries out the reaction (6S)-5,6,7,8-tetrahydrofolate(out) + ATP + H2O = (6S)-5,6,7,8-tetrahydrofolate(in) + ADP + phosphate + H(+). The enzyme catalyses L-tryptophan(out) + ATP + H2O = L-tryptophan(in) + ADP + phosphate + H(+). It catalyses the reaction L-kynurenine(out) + ATP + H2O = L-kynurenine(in) + ADP + phosphate + H(+). The catalysed reaction is xanthine(out) + ATP + H2O = xanthine(in) + ADP + phosphate + H(+). ATP-dependent transporter of the ATP-binding cassette (ABC) family which transports various molecules including bioamines, neurotransmitters, metabolic intermediates and second messengers. In the eye, required for the transport of the eye red and brown pigment precursors, guanine and tryptophan, into pigment cell granules. Probably in association with bw/brown, involved in the transport of guanine. Probably in association with st/scarlet involved in the transport of kynurenine and probably tryptophan. Involved in the transport of kynurenine in pupal eyes. May play a role in histamine uptake by the lamina epithelial glia which surrounds photoreceptors R1-R6. In Malpighian tubules, involved in the transport of cGMP, guanine, xanthine, riboflavin, kynurenine and tryptophan. Probably in association with br/brown, involved in aging-induced intestinal stem cell proliferation in the midgut by regulating tetrahydrofolate transport. Probably in association with st/scarlet, plays a role in zinc storage granule biogenesis in Malpighian tubule principal epithelial cells. The chain is Protein white from Drosophila melanogaster (Fruit fly).